The following is a 688-amino-acid chain: Potassium-transporting ATPase ATP-binding subunit (688 aa).

4 helical membrane-spanning segments follow: residues 34 to 54, 62 to 82, 219 to 239, and 260 to 280; these read PVMF…LAIL, ALFT…ANFA, VALT…TATL, and VLVA…LSAI. Catalysis depends on Asp313, which acts as the 4-aspartylphosphate intermediate. ATP is bound by residues Asp350, Glu354, 383–390, and Lys401; that span reads FSAQTRMS. Residues Asp524 and Asp528 each contribute to the Mg(2+) site. A run of 3 helical transmembrane segments spans residues 594–614, 622–642, and 667–687; these read FAII…LNVM, AILS…PLAL, and GLLV…ALIM.

Belongs to the cation transport ATPase (P-type) (TC 3.A.3) family. Type IA subfamily. The system is composed of three essential subunits: KdpA, KdpB and KdpC.

It is found in the cell inner membrane. The catalysed reaction is K(+)(out) + ATP + H2O = K(+)(in) + ADP + phosphate + H(+). Part of the high-affinity ATP-driven potassium transport (or Kdp) system, which catalyzes the hydrolysis of ATP coupled with the electrogenic transport of potassium into the cytoplasm. This subunit is responsible for energy coupling to the transport system and for the release of the potassium ions to the cytoplasm. This Yersinia enterocolitica serotype O:8 / biotype 1B (strain NCTC 13174 / 8081) protein is Potassium-transporting ATPase ATP-binding subunit.